We begin with the raw amino-acid sequence, 368 residues long: 3-dehydroquinate synthase (368 aa).

NAD(+) contacts are provided by residues Gly99–Asp103, Thr123–Thr124, Lys136, and Lys145. Zn(2+)-binding residues include Glu178, His242, and His259.

It belongs to the sugar phosphate cyclases superfamily. Dehydroquinate synthase family. NAD(+) serves as cofactor. Requires Co(2+) as cofactor. Zn(2+) is required as a cofactor.

The protein resides in the cytoplasm. It carries out the reaction 7-phospho-2-dehydro-3-deoxy-D-arabino-heptonate = 3-dehydroquinate + phosphate. It participates in metabolic intermediate biosynthesis; chorismate biosynthesis; chorismate from D-erythrose 4-phosphate and phosphoenolpyruvate: step 2/7. Functionally, catalyzes the conversion of 3-deoxy-D-arabino-heptulosonate 7-phosphate (DAHP) to dehydroquinate (DHQ). This Chlorobaculum tepidum (strain ATCC 49652 / DSM 12025 / NBRC 103806 / TLS) (Chlorobium tepidum) protein is 3-dehydroquinate synthase.